The following is a 204-amino-acid chain: Nucleoside triphosphate pyrophosphatase (204 aa).

Asp-78 acts as the Proton acceptor in catalysis.

Belongs to the Maf family. It depends on a divalent metal cation as a cofactor.

It localises to the cytoplasm. It catalyses the reaction a ribonucleoside 5'-triphosphate + H2O = a ribonucleoside 5'-phosphate + diphosphate + H(+). It carries out the reaction a 2'-deoxyribonucleoside 5'-triphosphate + H2O = a 2'-deoxyribonucleoside 5'-phosphate + diphosphate + H(+). In terms of biological role, nucleoside triphosphate pyrophosphatase. May have a dual role in cell division arrest and in preventing the incorporation of modified nucleotides into cellular nucleic acids. This chain is Nucleoside triphosphate pyrophosphatase, found in Prochlorococcus marinus (strain MIT 9215).